The sequence spans 461 residues: UDP-N-acetylmuramoylalanine--D-glutamate ligase (461 aa).

123–129 contacts ATP; sequence GTNGKTT.

Belongs to the MurCDEF family.

Its subcellular location is the cytoplasm. It carries out the reaction UDP-N-acetyl-alpha-D-muramoyl-L-alanine + D-glutamate + ATP = UDP-N-acetyl-alpha-D-muramoyl-L-alanyl-D-glutamate + ADP + phosphate + H(+). The protein operates within cell wall biogenesis; peptidoglycan biosynthesis. In terms of biological role, cell wall formation. Catalyzes the addition of glutamate to the nucleotide precursor UDP-N-acetylmuramoyl-L-alanine (UMA). The sequence is that of UDP-N-acetylmuramoylalanine--D-glutamate ligase from Natranaerobius thermophilus (strain ATCC BAA-1301 / DSM 18059 / JW/NM-WN-LF).